Here is a 364-residue protein sequence, read N- to C-terminus: C2 calcium-dependent domain-containing protein 4A (364 aa).

Disordered stretches follow at residues 118 to 175 and 192 to 242; these read GSPS…PPRC and AGRS…RPER. The span at 220-233 shows a compositional bias: polar residues; the sequence is SPGSPTQAPVTSLS. The C2 domain maps to 254-364; sequence AGGALRLAAE…ELLLGPLLLL (111 aa).

This sequence belongs to the C2CD4 family.

It is found in the nucleus. Functionally, may be involved in inflammatory process. May regulate cell architecture and adhesion. The polypeptide is C2 calcium-dependent domain-containing protein 4A (C2CD4A) (Bos taurus (Bovine)).